A 403-amino-acid polypeptide reads, in one-letter code: ATP phosphoribosyltransferase regulatory subunit (403 aa).

This sequence belongs to the class-II aminoacyl-tRNA synthetase family. HisZ subfamily. As to quaternary structure, heteromultimer composed of HisG and HisZ subunits.

It localises to the cytoplasm. Its pathway is amino-acid biosynthesis; L-histidine biosynthesis; L-histidine from 5-phospho-alpha-D-ribose 1-diphosphate: step 1/9. Functionally, required for the first step of histidine biosynthesis. May allow the feedback regulation of ATP phosphoribosyltransferase activity by histidine. This chain is ATP phosphoribosyltransferase regulatory subunit, found in Nostoc punctiforme (strain ATCC 29133 / PCC 73102).